A 76-amino-acid chain; its full sequence is DNA-directed RNA polymerase subunit epsilon (76 aa).

This sequence belongs to the RNA polymerase subunit epsilon family. RNAP is composed of a core of 2 alpha, a beta and a beta' subunit. The core is associated with a delta subunit, and at least one of epsilon or omega. When a sigma factor is associated with the core the holoenzyme is formed, which can initiate transcription.

The enzyme catalyses RNA(n) + a ribonucleoside 5'-triphosphate = RNA(n+1) + diphosphate. Its function is as follows. A non-essential component of RNA polymerase (RNAP). The chain is DNA-directed RNA polymerase subunit epsilon from Lactococcus lactis subsp. cremoris (strain MG1363).